The chain runs to 114 residues: Large ribosomal subunit protein uL22 (114 aa).

It belongs to the universal ribosomal protein uL22 family. In terms of assembly, part of the 50S ribosomal subunit.

In terms of biological role, this protein binds specifically to 23S rRNA; its binding is stimulated by other ribosomal proteins, e.g. L4, L17, and L20. It is important during the early stages of 50S assembly. It makes multiple contacts with different domains of the 23S rRNA in the assembled 50S subunit and ribosome. The globular domain of the protein is located near the polypeptide exit tunnel on the outside of the subunit, while an extended beta-hairpin is found that lines the wall of the exit tunnel in the center of the 70S ribosome. The sequence is that of Large ribosomal subunit protein uL22 from Desulfosudis oleivorans (strain DSM 6200 / JCM 39069 / Hxd3) (Desulfococcus oleovorans).